A 110-amino-acid chain; its full sequence is DNA-binding protein PAE3044 (110 aa).

The protein belongs to the PDCD5 family.

The polypeptide is DNA-binding protein PAE3044 (Pyrobaculum aerophilum (strain ATCC 51768 / DSM 7523 / JCM 9630 / CIP 104966 / NBRC 100827 / IM2)).